A 195-amino-acid chain; its full sequence is PAP fimbrial minor pilin protein (195 aa).

A signal peptide spans 1 to 22 (MRLRFSVPLFFFGCVFVHGVFA). Cys-58 and Cys-97 are joined by a disulfide.

Belongs to the fimbrial protein family.

The protein resides in the secreted. Its subcellular location is the fimbrium. Its function is as follows. Fimbriae (also called pili), polar filaments radiating from the surface of the bacterium to a length of 0.5-1.5 micrometers and numbering 100-300 per cell, enable bacteria to colonize the epithelium of specific host organs. In terms of biological role, papH seems to anchor the pilus to the bacterial cell. In addition the stoichiometric relationship between PapH and PapA determines the pilus length. This is PAP fimbrial minor pilin protein (papH) from Escherichia coli.